Reading from the N-terminus, the 399-residue chain is Pre-mycofactocin synthase (399 aa).

Residues 4–386 enclose the FMN hydroxy acid dehydrogenase domain; it reads ARDIWFETVA…VPEDILVPEG (383 aa). Residues Ser-111 and Gln-131 each contribute to the FMN site. Tyr-133 contacts a 2-oxocarboxylate. An FMN-binding site is contributed by Thr-159. Arg-168 provides a ligand contact to a 2-oxocarboxylate. Lys-257 contacts FMN. His-281 serves as the catalytic Proton acceptor. Residues 312 to 316 and 335 to 336 each bind FMN; these read DGGIR and GR.

It belongs to the FMN-dependent alpha-hydroxy acid dehydrogenase family. The cofactor is FMN.

It catalyses the reaction 3-amino-5-[(4-hydroxyphenyl)methyl]-4,4-dimethyl-2-pyrrolidin-2-one + O2 + H2O = pre-mycofactocin + H2O2 + NH4(+). Functionally, involved in the biosynthesis of the enzyme cofactor mycofactocin (MFT). Catalyzes the oxidative deamination of AHDP (3-amino-5-[(4-hydroxyphenyl)methyl]-4,4-dimethyl-2-pyrrolidin-2-one), forming an alpha-keto amide moiety on the resulting molecule, which is called pre-mycofactocin (PMFT). This reaction occurs via a 5-[(4-hydroxyphenyl)methyl]-3-imino-4,4-dimethylpyrrolidin-2-one intermediate, which converts to PMFT. The alpha-keto amide moiety is the redox-active center for the redox activity of mycofactocin. Is required for the in vivo ethanol assimilation in M.smegmatis. The sequence is that of Pre-mycofactocin synthase from Mycolicibacterium smegmatis (strain ATCC 700084 / mc(2)155) (Mycobacterium smegmatis).